Consider the following 147-residue polypeptide: uncharacterized protein (147 aa).

2 helical membrane-spanning segments follow: residues 4–26 (YLRVVLPLSLALNSYGVLAFFWG) and 123–145 (YALCVGFFVVLLQLLWGSARAYF).

It localises to the cell membrane. This is an uncharacterized protein from Treponema pallidum (strain Nichols).